The primary structure comprises 118 residues: Myotrophin (118 aa).

ANK repeat units follow at residues 1–30 (MGDK…DVNR), 34–65 (GGRK…NAAD), and 67–98 (HGIT…TVKG).

Belongs to the myotrophin family.

The protein localises to the cytoplasm. The protein resides in the nucleus. Its subcellular location is the perinuclear region. Its function is as follows. Regulates NF-kappa-B transcription factor activity. Promotes growth of cardiomyocytes, but not cardiomyocyte proliferation. Promotes cardiac muscle hypertrophy. Plays a role in the regulation of the growth of actin filaments. Inhibits the activity of the F-actin-capping protein complex. This Xenopus tropicalis (Western clawed frog) protein is Myotrophin (mtpn).